Here is a 394-residue protein sequence, read N- to C-terminus: Putative F-box protein At5g66830 (394 aa).

An F-box domain is found at Asp-17–Ile-63.

This chain is Putative F-box protein At5g66830, found in Arabidopsis thaliana (Mouse-ear cress).